A 180-amino-acid chain; its full sequence is Acireductone dioxygenase (180 aa).

Fe(2+)-binding residues include H99, H101, E105, and H145. Residues H99, H101, E105, and H145 each contribute to the Ni(2+) site.

Belongs to the acireductone dioxygenase (ARD) family. As to quaternary structure, monomer. It depends on Fe(2+) as a cofactor. The cofactor is Ni(2+).

The catalysed reaction is 1,2-dihydroxy-5-(methylsulfanyl)pent-1-en-3-one + O2 = 3-(methylsulfanyl)propanoate + CO + formate + 2 H(+). It catalyses the reaction 1,2-dihydroxy-5-(methylsulfanyl)pent-1-en-3-one + O2 = 4-methylsulfanyl-2-oxobutanoate + formate + 2 H(+). Its pathway is amino-acid biosynthesis; L-methionine biosynthesis via salvage pathway; L-methionine from S-methyl-5-thio-alpha-D-ribose 1-phosphate: step 5/6. Its function is as follows. Catalyzes 2 different reactions between oxygen and the acireductone 1,2-dihydroxy-3-keto-5-methylthiopentene (DHK-MTPene) depending upon the metal bound in the active site. Fe-containing acireductone dioxygenase (Fe-ARD) produces formate and 2-keto-4-methylthiobutyrate (KMTB), the alpha-ketoacid precursor of methionine in the methionine recycle pathway. Ni-containing acireductone dioxygenase (Ni-ARD) produces methylthiopropionate, carbon monoxide and formate, and does not lie on the methionine recycle pathway. This is Acireductone dioxygenase from Geobacillus thermodenitrificans (strain NG80-2).